Reading from the N-terminus, the 337-residue chain is ATP-dependent (S)-NAD(P)H-hydrate dehydratase (337 aa).

A Phosphoserine modification is found at Ser6. One can recognise a YjeF C-terminal domain in the interval 11-335 (IKLAQKRCIP…DRVGEVFAKL (325 aa)). (6S)-NADPHX contacts are provided by residues Gly121 and 182-188 (NVVEFKR). ATP contacts are provided by residues 218–222 (KGQSD) and 240–249 (GSNKRVGGQG). Residues 224–246 (IFSPDSEKDMLTNSEEGSNKRVG) form a disordered region. Residue Asp250 participates in (6S)-NADPHX binding.

Belongs to the NnrD/CARKD family. Mg(2+) is required as a cofactor.

It is found in the cytoplasm. The enzyme catalyses (6S)-NADHX + ATP = ADP + phosphate + NADH + H(+). It carries out the reaction (6S)-NADPHX + ATP = ADP + phosphate + NADPH + H(+). In terms of biological role, catalyzes the dehydration of the S-form of NAD(P)HX at the expense of ATP, which is converted to ADP. Together with NAD(P)HX epimerase, which catalyzes the epimerization of the S- and R-forms, the enzyme allows the repair of both epimers of NAD(P)HX, a damaged form of NAD(P)H that is a result of enzymatic or heat-dependent hydration. In Saccharomyces cerevisiae (strain ATCC 204508 / S288c) (Baker's yeast), this protein is ATP-dependent (S)-NAD(P)H-hydrate dehydratase.